The primary structure comprises 401 residues: S-adenosylmethionine synthase (401 aa).

An ATP-binding site is contributed by 136–141; that stretch reads GQGSVD.

The protein belongs to the AdoMet synthase 2 family. Mg(2+) is required as a cofactor.

It carries out the reaction L-methionine + ATP + H2O = S-adenosyl-L-methionine + phosphate + diphosphate. It participates in amino-acid biosynthesis; S-adenosyl-L-methionine biosynthesis; S-adenosyl-L-methionine from L-methionine: step 1/1. In terms of biological role, catalyzes the formation of S-adenosylmethionine from methionine and ATP. The protein is S-adenosylmethionine synthase of Pyrococcus furiosus (strain ATCC 43587 / DSM 3638 / JCM 8422 / Vc1).